An 81-amino-acid chain; its full sequence is Adipogenin (81 aa).

The helical transmembrane segment at 16–36 (FLVFWLCLPVALLLFLLIIWL) threads the bilayer.

The protein belongs to the adipogenin family. Highly expressed in subcutaneous, perirenal and mesecentric adipose tissue.

Its subcellular location is the membrane. It localises to the nucleus. In terms of biological role, plays a role in stimulating adipocyte differentiation and development. This is Adipogenin from Bos taurus (Bovine).